The primary structure comprises 93 residues: Large ribosomal subunit protein eL42 (93 aa).

4 residues coordinate Zn(2+): cysteine 11, cysteine 14, cysteine 71, and cysteine 74. A C4-type zinc finger spans residues cysteine 11 to cysteine 74.

Belongs to the eukaryotic ribosomal protein eL42 family. Part of the 50S ribosomal subunit. Requires Zn(2+) as cofactor.

In terms of biological role, binds to the 23S rRNA. This is Large ribosomal subunit protein eL42 from Thermoplasma acidophilum (strain ATCC 25905 / DSM 1728 / JCM 9062 / NBRC 15155 / AMRC-C165).